A 145-amino-acid chain; its full sequence is Ribonuclease P protein component (145 aa).

A disordered region spans residues 119–145; sequence PLPAAPGTMPPARTVRPSSPSPTEPEL.

It belongs to the RnpA family. In terms of assembly, consists of a catalytic RNA component (M1 or rnpB) and a protein subunit.

The enzyme catalyses Endonucleolytic cleavage of RNA, removing 5'-extranucleotides from tRNA precursor.. In terms of biological role, RNaseP catalyzes the removal of the 5'-leader sequence from pre-tRNA to produce the mature 5'-terminus. It can also cleave other RNA substrates such as 4.5S RNA. The protein component plays an auxiliary but essential role in vivo by binding to the 5'-leader sequence and broadening the substrate specificity of the ribozyme. In Xanthomonas euvesicatoria pv. vesicatoria (strain 85-10) (Xanthomonas campestris pv. vesicatoria), this protein is Ribonuclease P protein component.